The primary structure comprises 778 residues: Preasperterpenoid A synthase PvPS (778 aa).

The tract at residues 1 to 414 is terpene cyclase; that stretch reads MAATKKSTAT…HRYNFHKPAA (414 aa). Mg(2+) contacts are provided by D176 and D180. Residue D176 coordinates substrate. The DDXXD 1 signature appears at 176 to 180; the sequence is DDILD. Substrate is bound by residues 266–269, N310, 314–318, and 406–407; these read RVIN, SWEKE, and RY. The NSE/DTE motif lies at 310–318; that stretch reads NDYFSWEKE. Residues 414–431 are compositionally biased toward basic and acidic residues; that stretch reads AKENEDTDDEGAKSDDSK. The tract at residues 415 to 778 is prenyltransferase; the sequence is KENEDTDDEG…LRLLLKRLQV (364 aa). Positions 416–454 are disordered; it reads ENEDTDDEGAKSDDSKTTLNDSTDSTVVDVKTPATSGLL. Residues K499, R502, and H531 each coordinate isopentenyl diphosphate. Residues D538 and D542 each contribute to the Mg(2+) site. The short motif at 538–542 is the DDXXD 2 element; that stretch reads DDIED. A dimethylallyl diphosphate-binding site is contributed by R547. R548 is a binding site for isopentenyl diphosphate. Positions 625, 626, 662, 669, 679, and 689 each coordinate dimethylallyl diphosphate.

The protein in the N-terminal section; belongs to the terpene synthase family. In the C-terminal section; belongs to the FPP/GGPP synthase family. Hexamer. It depends on Mg(2+) as a cofactor.

It carries out the reaction isopentenyl diphosphate + (2E,6E)-farnesyl diphosphate = (2E,6E,10E)-geranylgeranyl diphosphate + diphosphate. The enzyme catalyses isopentenyl diphosphate + (2E,6E,10E)-geranylgeranyl diphosphate = (2E,6E,10E,14E)-geranylfarnesyl diphosphate + diphosphate. The catalysed reaction is (2E,6E,10E,14E)-geranylfarnesyl diphosphate = preasperterpenoid A + diphosphate. Its pathway is secondary metabolite biosynthesis; terpenoid biosynthesis. Its function is as follows. Bifunctional sesterterpene synthase that possesses both prenyl transferase and terpene cyclase activity, converting isopentenyl diphosphate and dimethylallyl diphosphate into geranylfarnesyl diphosphate (GFPP) and further converting GFPP into preasperterpenoid A. In Talaromyces verruculosus (Penicillium verruculosum), this protein is Preasperterpenoid A synthase PvPS.